Consider the following 233-residue polypeptide: Enolase-phosphatase E1 (233 aa).

D16 and E18 together coordinate Mg(2+). Substrate contacts are provided by residues 131–132 (SS) and K167. Mg(2+) is bound at residue D193.

This sequence belongs to the HAD-like hydrolase superfamily. MasA/MtnC family. In terms of assembly, monomer. It depends on Mg(2+) as a cofactor.

The protein localises to the cytoplasm. It is found in the nucleus. It catalyses the reaction 5-methylsulfanyl-2,3-dioxopentyl phosphate + H2O = 1,2-dihydroxy-5-(methylsulfanyl)pent-1-en-3-one + phosphate. The protein operates within amino-acid biosynthesis; L-methionine biosynthesis via salvage pathway; L-methionine from S-methyl-5-thio-alpha-D-ribose 1-phosphate: step 3/6. Its pathway is amino-acid biosynthesis; L-methionine biosynthesis via salvage pathway; L-methionine from S-methyl-5-thio-alpha-D-ribose 1-phosphate: step 4/6. Bifunctional enzyme that catalyzes the enolization of 2,3-diketo-5-methylthiopentyl-1-phosphate (DK-MTP-1-P) into the intermediate 2-hydroxy-3-keto-5-methylthiopentenyl-1-phosphate (HK-MTPenyl-1-P), which is then dephosphorylated to form the acireductone 1,2-dihydroxy-3-keto-5-methylthiopentene (DHK-MTPene). In Meyerozyma guilliermondii (strain ATCC 6260 / CBS 566 / DSM 6381 / JCM 1539 / NBRC 10279 / NRRL Y-324) (Yeast), this protein is Enolase-phosphatase E1.